Here is a 344-residue protein sequence, read N- to C-terminus: Phenylalanine--tRNA ligase alpha subunit (344 aa).

Residue glutamate 256 participates in Mg(2+) binding.

This sequence belongs to the class-II aminoacyl-tRNA synthetase family. Phe-tRNA synthetase alpha subunit type 1 subfamily. Tetramer of two alpha and two beta subunits. It depends on Mg(2+) as a cofactor.

It is found in the cytoplasm. The catalysed reaction is tRNA(Phe) + L-phenylalanine + ATP = L-phenylalanyl-tRNA(Phe) + AMP + diphosphate + H(+). This is Phenylalanine--tRNA ligase alpha subunit from Oceanobacillus iheyensis (strain DSM 14371 / CIP 107618 / JCM 11309 / KCTC 3954 / HTE831).